A 239-amino-acid chain; its full sequence is Probable transcriptional regulatory protein BT9727_0453 (239 aa).

It belongs to the TACO1 family. YeeN subfamily.

The protein resides in the cytoplasm. The chain is Probable transcriptional regulatory protein BT9727_0453 from Bacillus thuringiensis subsp. konkukian (strain 97-27).